The following is a 379-amino-acid chain: Alcohol dehydrogenase class-3 (379 aa).

A2 is modified (N-acetylalanine). C47 is a binding site for Zn(2+). Position 48 (H48) interacts with NAD(+). T49 and H69 together coordinate an alcohol. H69, E70, C99, C102, C105, C113, and C177 together coordinate Zn(2+). NAD(+)-binding positions include G202–G207, D226, K231, I272, V295–V297, T320–F322, and R372.

It belongs to the zinc-containing alcohol dehydrogenase family. Class-III subfamily. In terms of assembly, homodimer. Zn(2+) serves as cofactor. Ubiquitous.

It localises to the cytoplasm. It carries out the reaction a primary alcohol + NAD(+) = an aldehyde + NADH + H(+). The enzyme catalyses a secondary alcohol + NAD(+) = a ketone + NADH + H(+). The catalysed reaction is S-(hydroxymethyl)glutathione + NADP(+) = S-formylglutathione + NADPH + H(+). It catalyses the reaction S-(hydroxymethyl)glutathione + NAD(+) = S-formylglutathione + NADH + H(+). It carries out the reaction S-nitrosoglutathione + NADH + H(+) = S-(hydroxysulfenamide)glutathione + NAD(+). Its activity is regulated as follows. Repressed by thiol-modifying agents N-ethylmaleimide (NEM) and 5,5-dithio-bis-(2-nitrobenzoic acid) (DTNB), as well as by methyl methanethiosulfonate (MMTS) in a dose-dependent manner. Inhibited by hydrogen peroxide H(2)O(2). Alcohol dehydrogenase catalyzing the reduction of nitrosoglutathione. Can also use long-chain alcohols including cinnamyl alcohol and geraniol, and, to a lower extent, octanol. Plays a central role in formaldehyde detoxification. Not able to use ethanol (EtOH) as substrate. This Arabidopsis thaliana (Mouse-ear cress) protein is Alcohol dehydrogenase class-3.